The primary structure comprises 438 residues: Transmembrane protein 184C (438 aa).

The next 7 helical transmembrane spans lie at 17-37 (LAVVLYLLSIVVAVPLCVWEL), 48-68 (AWFIAGIFLLLTIPISLWVIL), 86-106 (ILWMVPIYSLDSWIALKYPSI), 176-196 (VLQYTVVRPFTTIIALVCELL), 212-232 (YLVIINNMSQLFAMYCLLLFY), 254-274 (VVFVSFWQAVVIALLVKVGVI), and 287-307 (AVATGLQDFIICIEMFLAAIA). The disordered stretch occupies residues 358-438 (PRKKFFPEDQ…EEPSEKPVAS (81 aa)). Composition is skewed to low complexity over residues 374 to 390 (SLLSSSSQDALSVASSV) and 404 to 413 (TVTPQTTPTT). Positions 426–438 (GVREEPSEKPVAS) are enriched in basic and acidic residues.

This sequence belongs to the TMEM184 family.

It is found in the membrane. Functionally, possible tumor suppressor which may play a role in cell growth. The polypeptide is Transmembrane protein 184C (TMEM184C) (Bos taurus (Bovine)).